Reading from the N-terminus, the 78-residue chain is Ferredoxin oxidoreductase 2 subunit ForD (78 aa).

4Fe-4S ferredoxin-type domains are found at residues 3–35 (FVAD…FKAS) and 37–66 (NSAW…HCIE). [4Fe-4S] cluster contacts are provided by Cys12, Cys17, Cys20, Cys24, Cys46, Cys49, Cys52, and Cys56.

As to quaternary structure, heterotetramer of one alpha, one beta, one delta and one gamma chain. The cofactor is [4Fe-4S] cluster.

This chain is Ferredoxin oxidoreductase 2 subunit ForD (forD2), found in Aquifex aeolicus (strain VF5).